The primary structure comprises 340 residues: Lysophospholipase L2 (340 aa).

The protein localises to the cell inner membrane. The catalysed reaction is a 1-acyl-sn-glycero-3-phosphocholine + H2O = sn-glycerol 3-phosphocholine + a fatty acid + H(+). This is Lysophospholipase L2 (pldB) from Escherichia coli O6:H1 (strain CFT073 / ATCC 700928 / UPEC).